The sequence spans 232 residues: Enolase-phosphatase E1 (232 aa).

The protein belongs to the HAD-like hydrolase superfamily. MasA/MtnC family. Monomer. Mg(2+) serves as cofactor.

The catalysed reaction is 5-methylsulfanyl-2,3-dioxopentyl phosphate + H2O = 1,2-dihydroxy-5-(methylsulfanyl)pent-1-en-3-one + phosphate. The protein operates within amino-acid biosynthesis; L-methionine biosynthesis via salvage pathway; L-methionine from S-methyl-5-thio-alpha-D-ribose 1-phosphate: step 3/6. Its pathway is amino-acid biosynthesis; L-methionine biosynthesis via salvage pathway; L-methionine from S-methyl-5-thio-alpha-D-ribose 1-phosphate: step 4/6. In terms of biological role, bifunctional enzyme that catalyzes the enolization of 2,3-diketo-5-methylthiopentyl-1-phosphate (DK-MTP-1-P) into the intermediate 2-hydroxy-3-keto-5-methylthiopentenyl-1-phosphate (HK-MTPenyl-1-P), which is then dephosphorylated to form the acireductone 1,2-dihydroxy-3-keto-5-methylthiopentene (DHK-MTPene). The protein is Enolase-phosphatase E1 of Xanthomonas euvesicatoria pv. vesicatoria (strain 85-10) (Xanthomonas campestris pv. vesicatoria).